The chain runs to 403 residues: S-adenosylmethionine synthase (403 aa).

His17 is a binding site for ATP. Asp19 contributes to the Mg(2+) binding site. Residue Glu45 coordinates K(+). L-methionine contacts are provided by Glu58 and Gln104. Residues 104 to 114 (QSPDIAQGVDT) are flexible loop. ATP is bound by residues 179-181 (DGK), 250-251 (KF), Asp259, 265-266 (RK), Ala282, and Lys286. Asp259 lines the L-methionine pocket. Position 290 (Lys290) interacts with L-methionine.

This sequence belongs to the AdoMet synthase family. As to quaternary structure, homotetramer; dimer of dimers. Mg(2+) serves as cofactor. K(+) is required as a cofactor.

The protein localises to the cytoplasm. The enzyme catalyses L-methionine + ATP + H2O = S-adenosyl-L-methionine + phosphate + diphosphate. It participates in amino-acid biosynthesis; S-adenosyl-L-methionine biosynthesis; S-adenosyl-L-methionine from L-methionine: step 1/1. In terms of biological role, catalyzes the formation of S-adenosylmethionine (AdoMet) from methionine and ATP. The overall synthetic reaction is composed of two sequential steps, AdoMet formation and the subsequent tripolyphosphate hydrolysis which occurs prior to release of AdoMet from the enzyme. In Mycobacterium avium (strain 104), this protein is S-adenosylmethionine synthase.